A 211-amino-acid polypeptide reads, in one-letter code: Interleukin-6 (211 aa).

A signal peptide spans 1 to 24 (MKFLSARDFQPVAFLGLMLLTATA). Cysteine 70 and cysteine 76 form a disulfide bridge. A Phosphoserine modification is found at serine 79. Cysteine 99 and cysteine 109 are joined by a disulfide.

This sequence belongs to the IL-6 superfamily. In terms of assembly, component of a hexamer of two molecules each of IL6, IL6R and IL6ST; first binds to IL6R to associate with the signaling subunit IL6ST. Interacts with IL6R (via the N-terminal ectodomain); this interaction may be affected by IL6R-binding with SORL1, hence decreasing IL6 cis signaling. Interacts with SORL1 (via the N-terminal ectodomain); this interaction leads to IL6 internalization and lysosomal degradation. May form a trimeric complex with the soluble SORL1 ectodomain and soluble IL6R receptor; this interaction might stabilize circulating IL6, hence promoting IL6 trans signaling.

The protein localises to the secreted. Its function is as follows. Cytokine with a wide variety of biological functions in immunity, tissue regeneration, and metabolism. Binds to IL6R, then the complex associates to the signaling subunit IL6ST/gp130 to trigger the intracellular IL6-signaling pathway. The interaction with the membrane-bound IL6R and IL6ST stimulates 'classic signaling', whereas the binding of IL6 and soluble IL6R to IL6ST stimulates 'trans-signaling'. Alternatively, 'cluster signaling' occurs when membrane-bound IL6:IL6R complexes on transmitter cells activate IL6ST receptors on neighboring receiver cells. In terms of biological role, IL6 is a potent inducer of the acute phase response. Rapid production of IL6 contributes to host defense during infection and tissue injury, but excessive IL6 synthesis is involved in disease pathology. In the innate immune response, is synthesized by myeloid cells, such as macrophages and dendritic cells, upon recognition of pathogens through toll-like receptors (TLRs) at the site of infection or tissue injury. In the adaptive immune response, is required for the differentiation of B-cells into immunoglolin-secreting cells. Plays a major role in the differentiation of CD4(+) T cell subsets. Essential factor for the development of T follicular helper (Tfh) cells that are required for the induction of germinal-center formation. Together with IL21, controls the early generation of Tfh cells and are critical for an effective antibody response to acute viral infection. Required to drive naive CD4(+) T cells to the Th17 lineage, through 'cluster signaling' by dendritic cells. Also required for proliferation of myeloma cells and the survival of plasmablast cells. Functionally, acts as an essential factor in bone homeostasis and on vessels directly or indirectly by induction of VEGF, resulting in increased angiogenesis activity and vascular permeability. Induces, through 'trans-signaling' and synergistically with IL1B and TNF, the production of VEGF. Involved in metabolic controls, is discharged into the bloodstream after muscle contraction increasing lipolysis and improving insulin resistance. 'Trans-signaling' in central nervous system regulates energy and glucose homeostasis. Mediates, through GLP-1, crosstalk between insulin-sensitive tissues, intestinal L cells and pancreatic islets to adapt to changes in insulin demand. Also acts as a myokine. Plays a protective role during liver injury, being required for maintenance of tissue regeneration. Also has a pivotal role in iron metabolism by regulating HAMP/hepcidin expression upon inflammation or bacterial infection. Through activation of IL6ST-YAP-NOTCH pathway, induces inflammation-induced epithelial regeneration. The protein is Interleukin-6 of Rattus norvegicus (Rat).